We begin with the raw amino-acid sequence, 488 residues long: Histamine H1 receptor (488 aa).

Topologically, residues 1–38 (MSFLPGMTPVTLSNFSWALEDRMLEGNSTTTPTRQLMP) are extracellular. Residues asparagine 14 and asparagine 27 are each glycosylated (N-linked (GlcNAc...) asparagine). Residues 39–59 (LVVVLSSVSLVTVALNLLVLY) form a helical membrane-spanning segment. Topologically, residues 60–73 (AVRSERKLHTVGNL) are cytoplasmic. The chain crosses the membrane as a helical span at residues 74–98 (YIVSLSVADLIVGAVVMPMSILYLH). Residues 99–106 (RSAWILGR) are Extracellular-facing. The helical transmembrane segment at 107–132 (PLCLFWLSMDYVASTASIFSVFILCI) threads the bilayer. The cysteines at positions 109 and 189 are disulfide-linked. Histamine contacts are provided by aspartate 116 and threonine 121. An important for agonist binding region spans residues 116 to 121 (DYVAST). At 133–153 (DRYRSVQQPLRYLRYRTKTRA) the chain is on the cytoplasmic side. Phosphothreonine occurs at positions 149 and 151. Residues 154–173 (SATILGAWLLSFLWVIPILG) form a helical membrane-spanning segment. At 174–197 (WHHFMAPTSEPREKKCETDFYDVT) the chain is on the extracellular side. The chain crosses the membrane as a helical span at residues 198 to 220 (WFKVMTAIINFYLPTLLMLWFYI). Asparagine 207 contributes to the histamine binding site. Residues 221 to 417 (RIYKAVRRHC…LNRERKAAKQ (197 aa)) are Cytoplasmic-facing. Serine 239 is subject to Phosphoserine. Residues 259-274 (RMGKESPWEDPKRCSK) show a composition bias toward basic and acidic residues. A disordered region spans residues 259 to 285 (RMGKESPWEDPKRCSKDASGVHTPMPS). Residues serine 345, serine 381, serine 383, serine 397, and serine 399 each carry the phosphoserine modification. The helical transmembrane segment at 418–441 (LGCIMAAFILCWIPYFVFFMVIAF) threads the bilayer. Residues 425–429 (FILCW) form an important for agonist binding region. Residue tyrosine 432 participates in histamine binding. Cysteine 442 and cysteine 445 are disulfide-bonded. Over 442–447 (CKSCSN) the chain is Extracellular. Residues 448–470 (EPVHMFTIWLGYLNSTLNPLIYP) form a helical membrane-spanning segment. The Cytoplasmic segment spans residues 471–488 (LCNENFRKTFKRILRIPP).

It belongs to the G-protein coupled receptor 1 family. Phosphorylation at sites in the second and third cytoplasmic loops independently contribute to agonist-induced receptor down-regulation.

It is found in the cell membrane. Its function is as follows. G-protein-coupled receptor for histamine, a biogenic amine that functions as an immune modulator and a neurotransmitter. Through the H1 receptor, histamine mediates the contraction of smooth muscles and increases capillary permeability due to contraction of terminal venules. Also mediates neurotransmission in the central nervous system and thereby regulates circadian rhythms, emotional and locomotor activities as well as cognitive functions. The polypeptide is Histamine H1 receptor (Cavia porcellus (Guinea pig)).